The sequence spans 357 residues: 4-hydroxymandelate synthase (357 aa).

2 VOC domains span residues 5 to 129 and 158 to 309; these read EIDY…LIQR and GIDH…IFTA. H161 lines the Fe cation pocket. H161, S201, T214, H241, and Q305 together coordinate substrate. A Fe cation-binding site is contributed by H241. Residue E320 participates in Fe cation binding.

Belongs to the 4HPPD family. In terms of assembly, monomer. Fe cation is required as a cofactor.

The enzyme catalyses 3-(4-hydroxyphenyl)pyruvate + O2 = (S)-4-hydroxymandelate + CO2. It participates in antibiotic biosynthesis; vancomycin biosynthesis. In terms of biological role, required to synthesize hydroxyphenylglycine, a recurring skeletal component of nonproteinogenic macrocyclic peptide antibiotics such as vancomycin. Catalyzes the conversion of p-hydroxyphenylpyruvate to p-hydroxymandelate. The decarboxylation and hydroxylation activities of HmaS show novel and distinct regioselectivity, compared to all other known p-hydroxyphenylpyruvate dioxygenases, by hydroxylating the benzylic position of the substrate instead of the phenyl ring. This Amycolatopsis orientalis (Nocardia orientalis) protein is 4-hydroxymandelate synthase.